The chain runs to 246 residues: DNA repair protein RecO (246 aa).

This sequence belongs to the RecO family.

Functionally, involved in DNA repair and RecF pathway recombination. This is DNA repair protein RecO from Alkaliphilus metalliredigens (strain QYMF).